A 246-amino-acid polypeptide reads, in one-letter code: Type III pantothenate kinase (246 aa).

Residue 6 to 13 (DVGNTHSV) participates in ATP binding. 103-106 (GADR) contacts substrate. D105 functions as the Proton acceptor in the catalytic mechanism. K(+) is bound at residue D125. Residue T128 participates in ATP binding. Residue T179 coordinates substrate.

Belongs to the type III pantothenate kinase family. As to quaternary structure, homodimer. It depends on NH4(+) as a cofactor. The cofactor is K(+).

It localises to the cytoplasm. It catalyses the reaction (R)-pantothenate + ATP = (R)-4'-phosphopantothenate + ADP + H(+). It participates in cofactor biosynthesis; coenzyme A biosynthesis; CoA from (R)-pantothenate: step 1/5. Its function is as follows. Catalyzes the phosphorylation of pantothenate (Pan), the first step in CoA biosynthesis. In Thermotoga maritima (strain ATCC 43589 / DSM 3109 / JCM 10099 / NBRC 100826 / MSB8), this protein is Type III pantothenate kinase (coaX).